The following is a 1077-amino-acid chain: MKNKRVLAKITALVVLLGVFFVLPSNISQLYADYEVVHDTFEVNFDGWCNLGVDTYLTAVENEGNNGTRGMMVINRSSASDGAYSEKGFYLDGGVEYKYSVFVKHNGTGTETFKLSVSYLDSETEEENKEVIATKDVVAGEWTEISAKYKAPKTAVNITLSITTDSTVDFIFDDVTITRKGMAEANTVYAANAVLKDMYANYFRVGSVLNSGTVNNSSIKALILREFNSITCENEMKPDATLVQSGSTNTNIRVSLNRAASILNFCAQNNIAVRGHTLVWHSQTPQWFFKDNFQDNGNWVSQSVMDQRLESYIKNMFAEIQRQYPSLNLYAYDVVNEAVSDDANRTRYYGGAREPGYGNGRSPWVQIYGDNKFIEKAFTYARKYAPANCKLYYNDYNEYWDHKRDCIASICANLYNKGLLDGVGMQSHINADMNGFSGIQNYKAALQKYINIGCDVQITELDISTENGKFSLQQQADKYKAVFQAAVDINRTSSKGKVTAVCVWGPNDANTWLGSQNAPLLFNANNQPKPAYNAVASIIPQSEWGDGNNPAGGGGGGKPEEPDANGYYYHDTFEGSVGQWTARGPAEVLLSGRTAYKGSESLLVRNRTAAWNGAQRALNPRTFVPGNTYCFSVVASFIEGASSTTFCMKLQYVDGSGTQRYDTIDMKTVGPNQWVHLYNPQYRIPSDATDMYVYVETADDTINFYIDEAIGAVAGTVIEGPAPQPTQPPVLLGDVNGDGTINSTDLTMLKRSVLRAITLTDDAKARADVDKNGSINSTDVLLLSRYLLRVIDKFPVAENPSSSFKYESAVQYRPAPDSYLNPCPQAGRIVKETYTGINGTKSLNVYLPYGYDPNKKYNIFYLMHGGGENENTIFSNDVKLQNILDHAIMNGELEPLIVVTPTFNGGNCTAQNFYQEFRQNVIPFVESKYSTYAESTTPQGIAASRMHRGFGGFSMGGLTTWYVMVNCLDYVAYFMPLSGDYWYGNSPQDKANSIAEAINRSGLSKREYFVFAATGSDHIAYANMNPQIEAMKALPHFDYTSDFSKGNFYFLVAPGATHWWGYVRHYIYDALPYFFHE.

Positions 1–26 (MKNKRVLAKITALVVLLGVFFVLPSN) are cleaved as a signal peptide. One can recognise a CBM-cenC 1 domain in the interval 33 to 180 (DYEVVHDTFE…IFDDVTITRK (148 aa)). The 350-residue stretch at 189–538 (YAANAVLKDM…KPAYNAVASI (350 aa)) folds into the GH10 domain. The Proton donor role is filled by E337. Catalysis depends on E460, which acts as the Nucleophile. Residues 543-563 (EWGDGNNPAGGGGGGKPEEPD) form a disordered region. In terms of domain architecture, CBM-cenC 2 spans 565–714 (NGYYYHDTFE…YIDEAIGAVA (150 aa)). Residues 728 to 796 (PPVLLGDVNG…LLRVIDKFPV (69 aa)) enclose the Dockerin domain.

The protein belongs to the glycosyl hydrolase 10 (cellulase F) family.

The catalysed reaction is Endohydrolysis of (1-&gt;4)-beta-D-xylosidic linkages in xylans.. The sequence is that of Endo-1,4-beta-xylanase Y (xynY) from Acetivibrio thermocellus (Hungateiclostridium thermocellum).